Here is a 206-residue protein sequence, read N- to C-terminus: Small ribosomal subunit protein uS4 (206 aa).

The region spanning 96–156 (TRLDNVVYRM…EKSQKQARIK (61 aa)) is the S4 RNA-binding domain.

Belongs to the universal ribosomal protein uS4 family. Part of the 30S ribosomal subunit. Contacts protein S5. The interaction surface between S4 and S5 is involved in control of translational fidelity.

One of the primary rRNA binding proteins, it binds directly to 16S rRNA where it nucleates assembly of the body of the 30S subunit. Functionally, with S5 and S12 plays an important role in translational accuracy. The sequence is that of Small ribosomal subunit protein uS4 from Shewanella loihica (strain ATCC BAA-1088 / PV-4).